The following is a 187-amino-acid chain: Large ribosomal subunit protein bL12cx (187 aa).

A chloroplast-targeting transit peptide spans 1–54 (MASTTLSIATTIRSSSPLTSASTHHFLSKPTAIEFPFRLSSSSSHRAINLRPIS).

It belongs to the bacterial ribosomal protein bL12 family.

It is found in the plastid. Its subcellular location is the chloroplast. This Arabidopsis thaliana (Mouse-ear cress) protein is Large ribosomal subunit protein bL12cx (RPL12C).